We begin with the raw amino-acid sequence, 1551 residues long: ABC-type transporter phomO (1551 aa).

7 helical membrane-spanning segments follow: residues 34–54 (LYFE…LLAA), 110–130 (CTAG…CTTV), 139–159 (SVPA…LAHF), 172–192 (SSSL…APLV), 202–222 (GSAL…LIAV), 314–334 (LGLY…FTLA), and 358–378 (GLIG…GWYW). The 274-residue stretch at 326-599 (LCLAGFTLAQ…LLQIIPSFGA (274 aa)) folds into the ABC transmembrane type-1 1 domain. The N-linked (GlcNAc...) asparagine glycan is linked to asparagine 384. 4 helical membrane-spanning segments follow: residues 428–448 (LAYA…TWML), 452–472 (VGPP…ASTY), 535–555 (LIVG…VLVF), and 577–597 (LIWI…IPSF). Residues 645–861 (IHNSSFSYTD…VEDENGDVDN (217 aa)) form the ABC transporter 1 domain. Asparagine 647 carries an N-linked (GlcNAc...) asparagine glycan. Residue 678-685 (GPAGCGKS) coordinates ATP. N-linked (GlcNAc...) asparagine glycosylation occurs at asparagine 721. The tract at residues 843–889 (YQFPPSQADVEDENGDVDNGAENTRPRESSHTTEAQSGPPEPKSKPT) is disordered. A run of 4 helical transmembrane segments spans residues 903–923 (SIGF…AFCL), 959–979 (VLPL…IVPL), 1027–1044 (LFNT…VILI), and 1137–1157 (LVLN…AVGL). An ABC transmembrane type-1 2 domain is found at 910–1199 (VLFIGGGIIF…LLTAWTSLET (290 aa)). The N-linked (GlcNAc...) asparagine glycan is linked to asparagine 1179. The segment covering 1219–1228 (DVLVRPDSLD) has biased composition (basic and acidic residues). The interval 1219 to 1296 (DVLVRPDSLD…HEATTITTTS (78 aa)) is disordered. The span at 1259–1270 (YDDDDESDENTD) shows a compositional bias: acidic residues. The ABC transporter 2 domain maps to 1287–1535 (HEATTITTTS…SDIFAFFGRS (249 aa)). 1323 to 1330 (GRTGSGKS) contacts ATP. N-linked (GlcNAc...) asparagine glycosylation occurs at asparagine 1486.

Belongs to the ABC transporter superfamily. ABCC family. Conjugate transporter (TC 3.A.1.208) subfamily.

The protein localises to the membrane. In terms of biological role, ABC-type transporter; part of the gene cluster that mediates the biosynthesis of the phomopsins, a group of hexapeptide mycotoxins which infects lupins and causes lupinosis disease in livestock. The chain is ABC-type transporter phomO from Diaporthe leptostromiformis (Lupinosis disease fungus).